A 202-amino-acid polypeptide reads, in one-letter code: MLTDVEGRAAVKLARKTIESFLSEEKLPEPQELGFELSPVFGEKRGVFVTLTESGLLRGCIGHPFPDSRLEDAIMDSAISAATRDPRFPPVREDELNKIVVEVTILTQPEKINAPAEELPERIEVGKHGLIVKQGYCQGLLLPQVAPEYNMDSIEFLGHTCLKAGLLPDAWLKGAEVSCFEGQIFKEKEPCGEVLEENFSCE.

The AMMECR1 domain occupies 5–196; sequence VEGRAAVKLA…EKEPCGEVLE (192 aa).

In Methanosarcina barkeri (strain Fusaro / DSM 804), this protein is Protein Mbar_A1807.